The sequence spans 108 residues: Protein YcgL (108 aa).

Residues 12–96 (MFCVIYRSSK…PPEDLLKQHL (85 aa)) form the YcgL domain.

The sequence is that of Protein YcgL from Escherichia coli (strain K12 / MC4100 / BW2952).